Consider the following 88-residue polypeptide: MASSKQADPQTDARPLPQDFETALAELESLVSAMENGTLPLEQSLSAYRRGVELARVCQDRLAQAEQQVKVLEGDLLRPLDPAALDDE.

The protein belongs to the XseB family. In terms of assembly, heterooligomer composed of large and small subunits.

The protein localises to the cytoplasm. It catalyses the reaction Exonucleolytic cleavage in either 5'- to 3'- or 3'- to 5'-direction to yield nucleoside 5'-phosphates.. Functionally, bidirectionally degrades single-stranded DNA into large acid-insoluble oligonucleotides, which are then degraded further into small acid-soluble oligonucleotides. This Bordetella bronchiseptica (strain ATCC BAA-588 / NCTC 13252 / RB50) (Alcaligenes bronchisepticus) protein is Exodeoxyribonuclease 7 small subunit.